We begin with the raw amino-acid sequence, 314 residues long: tRNA pseudouridine synthase B (314 aa).

His-43 provides a ligand contact to substrate. The active-site Nucleophile is Asp-48. The substrate site is built by Tyr-76, Tyr-179, and Leu-200.

The protein belongs to the pseudouridine synthase TruB family. Type 1 subfamily.

It catalyses the reaction uridine(55) in tRNA = pseudouridine(55) in tRNA. In terms of biological role, responsible for synthesis of pseudouridine from uracil-55 in the psi GC loop of transfer RNAs. In Cronobacter sakazakii (strain ATCC BAA-894) (Enterobacter sakazakii), this protein is tRNA pseudouridine synthase B.